Consider the following 294-residue polypeptide: ATP synthase gamma chain (294 aa).

This sequence belongs to the ATPase gamma chain family. F-type ATPases have 2 components, CF(1) - the catalytic core - and CF(0) - the membrane proton channel. CF(1) has five subunits: alpha(3), beta(3), gamma(1), delta(1), epsilon(1). CF(0) has three main subunits: a, b and c.

The protein resides in the cell inner membrane. Its function is as follows. Produces ATP from ADP in the presence of a proton gradient across the membrane. The gamma chain is believed to be important in regulating ATPase activity and the flow of protons through the CF(0) complex. This Campylobacter jejuni subsp. jejuni serotype O:23/36 (strain 81-176) protein is ATP synthase gamma chain.